Here is a 129-residue protein sequence, read N- to C-terminus: 4-amino-4-deoxychorismate mutase (129 aa).

In terms of domain architecture, Chorismate mutase spans 16 to 107 (AAATDPLDAL…ETCRLEDEWI (92 aa)).

It catalyses the reaction 4-amino-4-deoxychorismate = 4-amino-4-deoxyprephenate. The protein operates within antibiotic biosynthesis. In terms of biological role, involved in pristinamycin I biosynthesis. Probably catalyzes the conversion of 4-amino-4-deoxychorismate to 4-amino-4-deoxyprephenate. In Streptomyces pristinaespiralis, this protein is 4-amino-4-deoxychorismate mutase.